The primary structure comprises 2223 residues: Sperm-associated antigen 17 (2223 aa).

Basic and acidic residues-rich tracts occupy residues 144–172 (RENEKKVIEDKPKLEKDKGKAKSPKEKKA) and 200–212 (RRGEDDHTNRYID). The segment at 144 to 214 (RENEKKVIED…DHTNRYIDDE (71 aa)) is disordered. A coiled-coil region spans residues 266 to 295 (NQQQEVLLQSEDLEAEKLKKENAIKELKTF). Disordered stretches follow at residues 387–416 (MPTSEAPQPAVPAPGKKKAQYEEPQAPPPV), 680–710 (MSVQDNESNREPSDPSQCDANNMKHSDLNNL), 731–762 (PQHESLEQTTNNEIKDDAVTKADSHEKKPKKM), 950–1015 (EERL…EPKI), 1179–1212 (GKIKGKEKPKESLKEEEHPKEEEKKEEEVEPEPV), and 1345–1378 (ETIPSEITNTKKGKSHKSQSSMAHKGEIHDPPPE). Basic and acidic residues-rich tracts occupy residues 743 to 756 (EIKDDAVTKADSHE), 950 to 999 (EERL…EQVK), and 1182 to 1205 (KGKEKPKESLKEEEHPKEEEKKEE). Residues 940–966 (WKEEQHRLAEEERLREEKKAEKKGKEA) are a coiled coil. Positions 1345–1354 (ETIPSEITNT) are enriched in polar residues. Positions 1874–1907 (RHTASSKRWKEKIDKTRKEIETTQNYLMDIKNRI) form a coiled coil. Disordered regions lie at residues 1938-1957 (TKKNEDANETAVQDTSDLNL) and 1962-2008 (HKVS…SYEP). A compositionally biased stretch (polar residues) spans 1988–1998 (TAQNQTENLTK).

In terms of assembly, interacts (via the C-terminus) with SPAG6; the interaction probably occurs on polymerized microtubules. As to expression, highly expressed in testis. Expressed in organs that contain cilia-bearing cells including brain, oviduct, lung, and uterus.

Its subcellular location is the cytoplasm. The protein resides in the cytoskeleton. It is found in the flagellum axoneme. The protein localises to the cytoplasmic vesicle. It localises to the secretory vesicle. Its subcellular location is the acrosome. The protein resides in the golgi apparatus. Its function is as follows. Component of the central pair apparatus of ciliary axonemes. Plays a critical role in the function and structure of motile cilia. May play a role in endochondral bone formation, most likely because of a function in primary cilia of chondrocytes and osteoblasts. Essential for normal spermatogenesis and male fertility. Required for normal manchette structure, transport of proteins along the manchette microtubules and formation of the sperm head and flagellum. Essential for sperm flagellum development and proper assembly of the respiratory motile cilia central pair apparatus, but not the brain ependymal cilia. This chain is Sperm-associated antigen 17 (SPAG17), found in Homo sapiens (Human).